A 903-amino-acid chain; its full sequence is Immunoglobulin superfamily member 22 (903 aa).

Ig-like domains follow at residues 67-158 (PEFV…LLVT), 232-322 (EAIR…AELT), 418-508 (PIKF…AIVT), and 606-696 (PSVL…LHLS). Fibronectin type-III domains are found at residues 703–798 (FASQ…AKDP) and 804–898 (LVQD…MPPP).

The sequence is that of Immunoglobulin superfamily member 22 (IGSF22) from Homo sapiens (Human).